We begin with the raw amino-acid sequence, 224 residues long: Octanoyltransferase (224 aa).

Residues 38-213 enclose the BPL/LPL catalytic domain; sequence SATVDELWWV…YLVRRLGYSA (176 aa). Residues 77–84, 144–146, and 157–159 contribute to the substrate site; these read RGGQVTYH, SLG, and GLS. The active-site Acyl-thioester intermediate is the C175.

Belongs to the LipB family.

It localises to the cytoplasm. It catalyses the reaction octanoyl-[ACP] + L-lysyl-[protein] = N(6)-octanoyl-L-lysyl-[protein] + holo-[ACP] + H(+). The protein operates within protein modification; protein lipoylation via endogenous pathway; protein N(6)-(lipoyl)lysine from octanoyl-[acyl-carrier-protein]: step 1/2. Its function is as follows. Catalyzes the transfer of endogenously produced octanoic acid from octanoyl-acyl-carrier-protein onto the lipoyl domains of lipoate-dependent enzymes. Lipoyl-ACP can also act as a substrate although octanoyl-ACP is likely to be the physiological substrate. The protein is Octanoyltransferase of Nitrosococcus oceani (strain ATCC 19707 / BCRC 17464 / JCM 30415 / NCIMB 11848 / C-107).